A 177-amino-acid chain; its full sequence is B-phycoerythrin beta chain (177 aa).

Phycourobilin is bound by residues Cys-50 and Cys-61. An N4-methylasparagine modification is found at Asn-72. Positions 82 and 158 each coordinate (2R,3E)-phycoerythrobilin.

Belongs to the phycobiliprotein family. As to quaternary structure, heteromer of 6 alpha, 6 beta and one gamma chain. In terms of processing, contains two covalently linked phycoerythrobilin chromophores and one covalently linked phycourobilin chromophore.

The protein localises to the plastid. It is found in the chloroplast thylakoid membrane. Light-harvesting photosynthetic bile pigment-protein from the phycobiliprotein complex. In Rhodella violacea (Red alga), this protein is B-phycoerythrin beta chain (cpeB).